The sequence spans 309 residues: Methionyl-tRNA formyltransferase (309 aa).

110–113 (SLLP) provides a ligand contact to (6S)-5,6,7,8-tetrahydrofolate. The disordered stretch occupies residues 289 to 309 (KRMAATDWARGSRIEQGERLK). The segment covering 298 to 309 (RGSRIEQGERLK) has biased composition (basic and acidic residues).

This sequence belongs to the Fmt family.

It catalyses the reaction L-methionyl-tRNA(fMet) + (6R)-10-formyltetrahydrofolate = N-formyl-L-methionyl-tRNA(fMet) + (6S)-5,6,7,8-tetrahydrofolate + H(+). Its function is as follows. Attaches a formyl group to the free amino group of methionyl-tRNA(fMet). The formyl group appears to play a dual role in the initiator identity of N-formylmethionyl-tRNA by promoting its recognition by IF2 and preventing the misappropriation of this tRNA by the elongation apparatus. This is Methionyl-tRNA formyltransferase from Saccharopolyspora erythraea (strain ATCC 11635 / DSM 40517 / JCM 4748 / NBRC 13426 / NCIMB 8594 / NRRL 2338).